We begin with the raw amino-acid sequence, 293 residues long: MPELPEVETVRRGLQPAMEGATIVRAETRRKDLRFPFQTDFVARLEGQAVTGLGRRAKYLLADLASGDVLLMHLGMSGSFRVIDAAGVTVPGDFHRPRGEDRVHDHVRFTMSSRAEIVFNDPRRFGYMKIVARSALGDEPLLKGLGPEPLGNEFDAAVLAHGCRNRKTSLKAALLDQRVVAGLGNIYVCEALFRARLSPRRLAATLAMKTGAPSERAERLVGAIRDVLNQAIEAGGSSLRDHRQTTGELGYFQHSFQVYDREGDKCRTPACKGAVKRFTQNGRSTFWCPVCQT.

The active-site Schiff-base intermediate with DNA is the Pro-2. Glu-3 acts as the Proton donor in catalysis. The active-site Proton donor; for beta-elimination activity is Lys-58. DNA is bound by residues His-104, Arg-123, and Arg-166. The segment at 257-293 adopts an FPG-type zinc-finger fold; that stretch reads QVYDREGDKCRTPACKGAVKRFTQNGRSTFWCPVCQT. The active-site Proton donor; for delta-elimination activity is the Arg-283.

This sequence belongs to the FPG family. As to quaternary structure, monomer. Requires Zn(2+) as cofactor.

It carries out the reaction Hydrolysis of DNA containing ring-opened 7-methylguanine residues, releasing 2,6-diamino-4-hydroxy-5-(N-methyl)formamidopyrimidine.. The catalysed reaction is 2'-deoxyribonucleotide-(2'-deoxyribose 5'-phosphate)-2'-deoxyribonucleotide-DNA = a 3'-end 2'-deoxyribonucleotide-(2,3-dehydro-2,3-deoxyribose 5'-phosphate)-DNA + a 5'-end 5'-phospho-2'-deoxyribonucleoside-DNA + H(+). Involved in base excision repair of DNA damaged by oxidation or by mutagenic agents. Acts as a DNA glycosylase that recognizes and removes damaged bases. Has a preference for oxidized purines, such as 7,8-dihydro-8-oxoguanine (8-oxoG). Has AP (apurinic/apyrimidinic) lyase activity and introduces nicks in the DNA strand. Cleaves the DNA backbone by beta-delta elimination to generate a single-strand break at the site of the removed base with both 3'- and 5'-phosphates. The protein is Formamidopyrimidine-DNA glycosylase of Nitrobacter winogradskyi (strain ATCC 25391 / DSM 10237 / CIP 104748 / NCIMB 11846 / Nb-255).